Consider the following 909-residue polypeptide: Yellow mounds protein A (909 aa).

Residues 7–283 form the MIF4G domain; the sequence is LNVVSRILNK…KNLFELKNNK (277 aa). 5 disordered regions span residues 178-232, 415-439, 460-537, 627-689, and 704-774; these read SMGG…NNNI, MESSSNNNNSNSQLQFSLSSSSGIK, INLP…SSAP, VPPV…SEAR, and SLSG…AKKH. Residues 204-215 show a composition bias toward acidic residues; sequence DDDDHDEEDNEN. Low complexity-rich tracts occupy residues 216 to 231 and 417 to 436; these read NYENTTSTTNNINNNN and SSSNNNNSNSQLQFSLSSSS. Residues 473-490 are compositionally biased toward polar residues; sequence RSNSPSLSSVVKQPQSQQ. Low complexity predominate over residues 491-525; the sequence is NNNNNNNNNNNNTTITTTTSSNNNINNNNNNNNNN. Positions 721–738 are enriched in polar residues; that stretch reads STPTLKSTPAIVQNGGSI. Residues 739-756 are compositionally biased toward low complexity; it reads TSTSSSSSSSSSSSSSTT. The stretch at 845–877 forms a coiled coil; sequence TMLFDLEEMAQEQQNLEKQNDQQQNLLTQNNQI.

In terms of biological role, plays as essential role in regulating terminal differentiation. The polypeptide is Yellow mounds protein A (yelA) (Dictyostelium discoideum (Social amoeba)).